The sequence spans 450 residues: Cyclin-A2-3 (450 aa).

2 disordered regions span residues 18-53 (ALRA…NKRK) and 75-94 (NSKQ…SQLA). Polar residues predominate over residues 23-34 (EVTSTTQNQQRV).

It belongs to the cyclin family. Cyclin AB subfamily. Interacts with CDKA-1. Interacts with SAMBA.

It is found in the nucleus. In terms of biological role, negatively regulates endocycles and acts as a regulator of ploidy levels in endoreduplication. Promotes divisions in the guard cells (GCs) after the guard mother cells (GMC) symmetric division. This chain is Cyclin-A2-3 (CYCA2-3), found in Arabidopsis thaliana (Mouse-ear cress).